Consider the following 252-residue polypeptide: Cilia- and flagella-associated protein 300 (252 aa).

The protein belongs to the CFAP300 family.

It is found in the cytoplasm. The protein localises to the cytoskeleton. Its subcellular location is the cilium axoneme. Cilium- and flagellum-specific protein that plays a role in axonemal structure organization and motility. Plays a role in outer and inner axonemal dynein arm assembly. The protein is Cilia- and flagella-associated protein 300 of Paramecium tetraurelia.